Consider the following 1031-residue polypeptide: NACHT, LRR and PYD domains-containing protein 3 (1031 aa).

A Pyrin domain is found at 1-93; sequence MRMVSVRCKL…YEKAKREEPE (93 aa). At Ser5 the chain carries Phosphoserine. Tyr13 is subject to Phosphotyrosine. Cys125 is lipidated: S-palmitoyl cysteine. The segment at 126-129 is required for binding to phosphatidylinositol 4-phosphate (PtdIns4P); that stretch reads RKKK. Tyr131, Tyr135, and Tyr138 each carry phosphotyrosine. The 73-residue stretch at 135–207 folds into the FISNA domain; that stretch reads YRKYVRSKFQ…SSVNLELLFD (73 aa). Phosphoserine is present on Ser156. Thr164 contributes to the ATP binding site. Residues Ser195 and Ser198 each carry the phosphoserine modification. Positions 217-533 constitute an NACHT domain; the sequence is HTVVFQGAAG…EFFAAMYYLL (317 aa). 223–230 contacts ATP; that stretch reads GAAGIGKT. 2 positions are modified to phosphoserine: Ser262 and Ser292. A Glycyl lysine isopeptide (Lys-Gly) (interchain with G-Cter in ubiquitin) cross-link involves residue Lys321. Ser331 bears the Phosphoserine mark. The KFERQ-like motif 1 motif lies at 352–356; it reads LEKLQ. Residue Lys427 forms a Glycyl lysine isopeptide (Lys-Gly) (interchain with G-Cter in ubiquitin) linkage. Residue His519 participates in ATP binding. Positions 601 to 605 match the KFERQ-like motif 2 motif; sequence KIRLE. Lys687 participates in a covalent cross-link: Glycyl lysine isopeptide (Lys-Gly) (interchain with G-Cter in ubiquitin). A phosphoserine mark is found at Ser723 and Ser730. LRR repeat units lie at residues 737 to 757, 766 to 787, 794 to 814, 823 to 844, and 851 to 871; these read NLTE…NVLC, NIRR…NISS, KLVE…RLLC, NLKK…DLAS, and SLTR…GILC. Residues 793 to 797 carry the KFERQ-like motif 3 motif; that stretch reads QKLVE. Residue Ser801 is modified to Phosphoserine. Residues Cys832, Cys833, and Cys839 are each lipidated (S-palmitoyl cysteine). At Tyr856 the chain carries Phosphotyrosine. Lys873 is covalently cross-linked (Glycyl lysine isopeptide (Lys-Gly) (interchain with G-Cter in ubiquitin)). LRR repeat units lie at residues 880–901, 908–929, 937–958, and 965–986; these read NLQK…ALSS, NLTH…LLCE, KLQV…DLST, and SLRK…LLCE. Cys953 carries S-palmitoyl cysteine lipidation. Residue Lys968 forms a Glycyl lysine isopeptide (Lys-Gly) (interchain with G-Cter in ubiquitin) linkage. Residues 986–990 carry the KFERQ-like motif 4 motif; sequence EVLKQ. Ser1030 is subject to Phosphoserine.

Belongs to the NLRP family. Sensor component of NLRP3 inflammasomes; inflammasomes are supramolecular complexes that assemble in the cytosol in response to pathogens and other damage-associated signals and play critical roles in innate immunity and inflammation. The core of NLRP3 inflammasomes consists of a signal sensor component (NLRP3), an adapter (PYCARD/ASC), which recruits an effector pro-inflammatory caspase (CASP1 and, possibly, CASP4 and CASP5). Homodecamer; inactive NLRP3 forms homodecameric double-ring cages that hide pyrin domains within NACHT-LRR rings to avoid premature activation. Interacts (via pyrin domain) with PYCARD/ASC (via pyrin domain); interaction is direct. Interacts (via LRR repeat domain) with NEK7 (via N-terminus); the interaction is required for the formation of the complex NLRP3:PYCARD, oligomerization of PYCARD/ASC and activation of CASP1. Interacts (via LRR repeat domain) with NR4A1/Nur77 (via N-terminus); the interaction is direct, requires activation of NR4A1 by its ligands NBRE-containing dsDNA and lipopolysaccharide, and stimulates the association of NLRP3 with NEK7 for non-canonical NLRP3 inflammasome activation. Interacts with CARD8; leading to inhibit formation of the NLRP3 inflammasome. Interacts with MEFV; this interaction targets NLRP3 to degradation by autophagy, hence preventing excessive IL1B- and IL18-mediated inflammation. Interacts with EIF2AK2/PKR; this interaction requires EIF2AK2 activity, is accompanied by EIF2AK2 autophosphorylation and promotes inflammasome assembly in response to specific stimuli. Interacts with GBP5 (via DAPIN domain); this interaction promotes inflammasome assembly in response to microbial and soluble, but not crystalline, agents. Interacts with PML (isoform PML-1) (via the leucine-rich repeat (LRR) domain); PML-mediated increase in NLRP3 inflammasome activation does not depend upon this interaction. Interacts (via NACHT domain) with DHX33 (via DEAH box); NLRP3 activation in presence of cytosolic dsRNA is mediated by DHX33. Interacts (via NACHT and LRR domains) with ARRB2; this interaction is direct and inducible by polyunsaturated fatty acids (PUFAs). Interacts (via NACHT domain) with DDX3X under both LPS-primed and inflammasome-activating conditions. Interacts with IRF4 (via the LRR domain); this interaction is direct and is required for optimal IRF4 binding to IL4 promoter and efficient IL4 transactivation during differentiation of Th2 helper T-cells. Interacts with MAVS; promoting localization to mitochondria and activation of the NLRP3 inflammasome. Interacts with MARK4; promoting localization of NLRP3 to the microtubule organizing center (MTOC). Interacts with TRIM50; this interaction also promotes NLRP3 oligomerization and subsequent inflammasome activation. Interacts with IRGM; preventing NLRP3 inflammasome assembly and promoting NLRP3 degradation. Interacts (via KFERQ-like motifs) with HSPA8/HSC70; promoting NLRP3 degradation by the chaperone-mediated autophagy pathway. Interacts (via NACHT and LLR domains) with ABHD8; this interaction is enhanced in the presence of NLRP3 inflammasome inducers, such as ATP, nigericin, silica, or alum. Interaction with ABHD8 leads the recruitment of ZDHHC12, hence facilitating NLRP3 palmitoylation and degradation by the chaperone-mediated autophagy pathway (CMA), therefore attenuating NLRP3 inflammasome activation. Post-translationally, phosphorylation at Ser-198 by MAPK8/JNK1 increases inflammasome activation by promoting deubiquitination by BRCC3 and NLRP3 homooligomerization. Phosphorylation at Ser-801 by CSNK1A1 prevents inflammasome activation by preventing NEK7 recruitment. Phosphorylation at Ser-5 in the pyrin domain inhibits homomultimerization of NLRP3 and activation of the NLRP3 inflammasome: dephosphorylation by protein phosphatase 2A (PP2A) promotes assembly of the NLRP3 inflammasome. Phosphorylation at Ser-292 by PKD/PRKD1 promotes NLRP3 inflammasome assembly. Phosphorylation by ERK1/MAPK3 promotes NLRP3 inflammasome assembly. Phosphorylation by BTK (at Tyr-131, Tyr-135 and Tyr-138) in the region that mediates binding to phosphatidylinositol phosphate, promotes relocalization of NLRP3 and assembly of the NLRP3 inflammasome. Phosphorylation at Tyr-856 inhibits NLRP3 inflammasome assembly: dephosphorylation by PTPN22 promotes inflammasome activation. Phosphorylated by LATS1 and LATS2 at Ser-262 following palmitoylation by ZDHHC1, promoting its relocalization to the microtubule organizing center (MTOC), where NLRP3 is activated by NEK7, leading to inflammasome assembly and activation. In terms of processing, ubiquitinated; undergoes both 'Lys-48'- and 'Lys-63'-linked polyubiquitination. Ubiquitination does not lead to degradation, but inhibits inflammasome activation. Deubiquitination is catalyzed by BRCC3 and associated with NLRP3 activation and inflammasome assembly. This process can be induced by the activation of Toll-like receptors (by LPS), through a non-transcriptional pathway dependent on the mitochondrial production of reactive oxygen species, and by ATP. Ubiquitinated by TRIM31 via 'Lys-48'-linked ubiquitination, leading to its degradation by the proteasome. Ubiquitinated at Lys-687 by the SCF(FBXL2) complex, leading to its degradation by the proteasome. Ubiquitinated by TRIM35 via 'lys-48' and 'Lys-63'-linked ubiquitination leading to inhibition of NLRP3 inflammasome activation. Undergoes 'Lys-27'-linked polyubiquitination by MARCHF5, leading to NLRP3-NEK7 complex formation and NLRP3 oligomerization. Palmitoylation by ZDHHC12 promotes NLRP3 degradation by the chaperone-mediated autophagy pathway (CMA) and therefore limits NLRP3 inflammasome activation. Interaction with ZDHHC12, and hence NLRP3 palmitoylation, is greatly enhanced by ABHD8. Following palmitoylation, HSPA8/HSC70 recognizes and binds the KFERQ-like motifs on NLRP3 and promotes NLRP3 recruitment to lysosomes, where it is degraded via the chaperone-mediated autophagy pathway in a LAMP2-dependent process. Palmitoylation at Cys-832 and Cys-833 by ZDHHC5 enhances its binding to NEK7 leading to inflammasome assembly and activation. Palmitoylation at Cys-125 and Cys-953 by ZDHHC1 facilitates phosphorylation at Ser-262 by LATS1 and LATS2, promoting its relocalization to the microtubule organizing center (MTOC), where NLRP3 is activated by NEK7, leading to inflammasome assembly and activation. Depalmitoylated by ABHD17A. Post-translationally, degraded via selective autophagy following interaction with IRGM. IRGM promotes NLRP3 recruitment to autophagosome membranes, promoting its SQSTM1/p62-dependent autophagy-dependent degradation.

The protein localises to the cytoplasm. Its subcellular location is the cytosol. It is found in the inflammasome. It localises to the cytoskeleton. The protein resides in the microtubule organizing center. The protein localises to the golgi apparatus membrane. Its subcellular location is the endoplasmic reticulum. It is found in the mitochondrion. It localises to the secreted. The protein resides in the nucleus. It catalyses the reaction ATP + H2O = ADP + phosphate + H(+). With respect to regulation, under resting conditions, NLRP3 binds ADP and is autoinhibited. Inactive NLRP3 forms homodecameric double-ring cages that hide pyrin domains within NACHT-LRR rings to avoid premature activation. NLRP3 activation stimuli include extracellular ATP, nigericin, reactive oxygen species, crystals of monosodium urate or cholesterol, amyloid-beta fibers, environmental or industrial particles and nanoparticles, such as asbestos, silica, aluminum salts, cytosolic dsRNA, etc. Almost all stimuli trigger intracellular K(+) efflux. These stimuli lead to membrane perturbations that induce activation of NLRP3. Upon activation, NLRP3 is transported to microtubule organizing center (MTOC), where it is unlocked by NEK7, leading to its relocalization to dispersed trans-Golgi network (dTGN) vesicle membranes and recruitment of PYCARD/ASC for the formation of an active inflammasome complex. NEK7-activated NLRP3 forms a disk-shaped inflammasome. NLRP3 and PYCARD/ASC interact via their respective pyrin domains; interaction initiates speck formation (nucleation) which greatly enhances further addition of soluble PYCARD/ASC molecules to the speck in a prion-like polymerization process. Clustered PYCARD/ASC nucleates the formation of CASP1 filaments through the interaction of their respective CARD domains, acting as a platform for CASP1 polymerization and activation. Active CASP1 then processes IL1B and IL18 precursors, leading to the release of mature cytokines in the extracellular milieu and inflammatory response. NLRP3 inflammasome assembly is inhibited by IRGM, which impedes NLRP3 oligomerization. NLRP3 inflammasome is inhibited by cyclic AMP (cAMP), which directly binds NLRP3; inhibition is relieved by calcium-sensing receptor CASR, which inhibits production of cAMP. Specifically inhibited by sulfonylurea MCC950 (also named CP-456,773, CRID3), a potent and specific small-molecule inhibitor of the NLRP3 inflammasome that acts by preventing ATP hydrolysis. Functionally, sensor component of the NLRP3 inflammasome, which mediates inflammasome activation in response to defects in membrane integrity, leading to secretion of inflammatory cytokines IL1B and IL18 and pyroptosis. In response to pathogens and other damage-associated signals that affect the integrity of membranes, initiates the formation of the inflammasome polymeric complex composed of NLRP3, CASP1 and PYCARD/ASC. Recruitment of pro-caspase-1 (proCASP1) to the NLRP3 inflammasome promotes caspase-1 (CASP1) activation, which subsequently cleaves and activates inflammatory cytokines IL1B and IL18 and gasdermin-D (GSDMD), promoting cytokine secretion and pyroptosis. Activation of NLRP3 inflammasome is also required for HMGB1 secretion; stimulating inflammatory responses. Under resting conditions, ADP-bound NLRP3 is autoinhibited. NLRP3 activation stimuli include extracellular ATP, nigericin, reactive oxygen species, crystals of monosodium urate or cholesterol, amyloid-beta fibers, environmental or industrial particles and nanoparticles, such as asbestos, silica, aluminum salts, cytosolic dsRNA, etc. Almost all stimuli trigger intracellular K(+) efflux. These stimuli lead to membrane perturbation and activation of NLRP3. Upon activation, NLRP3 is transported to microtubule organizing center (MTOC), where it is unlocked by NEK7, leading to its relocalization to dispersed trans-Golgi network (dTGN) vesicle membranes and formation of an active inflammasome complex. Associates with dTGN vesicle membranes by binding to phosphatidylinositol 4-phosphate (PtdIns4P). Shows ATPase activity. Independently of inflammasome activation, regulates the differentiation of T helper 2 (Th2) cells and has a role in Th2 cell-dependent asthma and tumor growth. During Th2 differentiation, required for optimal IRF4 binding to IL4 promoter and for IRF4-dependent IL4 transcription. Binds to the consensus DNA sequence 5'-GRRGGNRGAG-3'. May also participate in the transcription of IL5, IL13, GATA3, CCR3, CCR4 and MAF. This Bos taurus (Bovine) protein is NACHT, LRR and PYD domains-containing protein 3 (NLRP3).